The sequence spans 122 residues: Large ribosomal subunit protein uL14 (122 aa).

This sequence belongs to the universal ribosomal protein uL14 family. Part of the 50S ribosomal subunit. Forms a cluster with proteins L3 and L19. In the 70S ribosome, L14 and L19 interact and together make contacts with the 16S rRNA in bridges B5 and B8.

Binds to 23S rRNA. Forms part of two intersubunit bridges in the 70S ribosome. In Bartonella bacilliformis (strain ATCC 35685 / KC583 / Herrer 020/F12,63), this protein is Large ribosomal subunit protein uL14.